A 78-amino-acid chain; its full sequence is Beta-defensin 12 (78 aa).

An N-terminal signal peptide occupies residues 1–27; sequence MALSRGTFYFGLALFFIVVELPSGSWA. Intrachain disulfides connect Cys46–Cys73, Cys53–Cys67, and Cys57–Cys74.

The protein belongs to the beta-defensin family.

It localises to the secreted. Functionally, has antibacterial activity. This Rattus norvegicus (Rat) protein is Beta-defensin 12 (Defb12).